We begin with the raw amino-acid sequence, 342 residues long: Protein RecA (342 aa).

Residue 65 to 72 (GPESSGKT) participates in ATP binding.

Belongs to the RecA family.

The protein localises to the cytoplasm. Its function is as follows. Can catalyze the hydrolysis of ATP in the presence of single-stranded DNA, the ATP-dependent uptake of single-stranded DNA by duplex DNA, and the ATP-dependent hybridization of homologous single-stranded DNAs. It interacts with LexA causing its activation and leading to its autocatalytic cleavage. The sequence is that of Protein RecA from Teredinibacter turnerae (strain ATCC 39867 / T7901).